The following is a 171-amino-acid chain: 3-hydroxydecanoyl-[acyl-carrier-protein] dehydratase (171 aa).

H71 is an active-site residue.

Belongs to the thioester dehydratase family. FabA subfamily. In terms of assembly, homodimer.

The protein localises to the cytoplasm. The catalysed reaction is a (3R)-hydroxyacyl-[ACP] = a (2E)-enoyl-[ACP] + H2O. The enzyme catalyses (3R)-hydroxydecanoyl-[ACP] = (2E)-decenoyl-[ACP] + H2O. It catalyses the reaction (2E)-decenoyl-[ACP] = (3Z)-decenoyl-[ACP]. It functions in the pathway lipid metabolism; fatty acid biosynthesis. Its function is as follows. Necessary for the introduction of cis unsaturation into fatty acids. Catalyzes the dehydration of (3R)-3-hydroxydecanoyl-ACP to E-(2)-decenoyl-ACP and then its isomerization to Z-(3)-decenoyl-ACP. Can catalyze the dehydratase reaction for beta-hydroxyacyl-ACPs with saturated chain lengths up to 16:0, being most active on intermediate chain length. The sequence is that of 3-hydroxydecanoyl-[acyl-carrier-protein] dehydratase from Agrobacterium fabrum (strain C58 / ATCC 33970) (Agrobacterium tumefaciens (strain C58)).